Reading from the N-terminus, the 209-residue chain is Imidazole glycerol phosphate synthase subunit HisH (209 aa).

In terms of domain architecture, Glutamine amidotransferase type-1 spans 3 to 209; sequence SVAVIDYGMG…ANFLTWNGVS (207 aa). Residue Cys-82 is the Nucleophile of the active site. Residues His-187 and Glu-189 contribute to the active site.

As to quaternary structure, heterodimer of HisH and HisF.

The protein resides in the cytoplasm. It carries out the reaction 5-[(5-phospho-1-deoxy-D-ribulos-1-ylimino)methylamino]-1-(5-phospho-beta-D-ribosyl)imidazole-4-carboxamide + L-glutamine = D-erythro-1-(imidazol-4-yl)glycerol 3-phosphate + 5-amino-1-(5-phospho-beta-D-ribosyl)imidazole-4-carboxamide + L-glutamate + H(+). The enzyme catalyses L-glutamine + H2O = L-glutamate + NH4(+). It participates in amino-acid biosynthesis; L-histidine biosynthesis; L-histidine from 5-phospho-alpha-D-ribose 1-diphosphate: step 5/9. In terms of biological role, IGPS catalyzes the conversion of PRFAR and glutamine to IGP, AICAR and glutamate. The HisH subunit catalyzes the hydrolysis of glutamine to glutamate and ammonia as part of the synthesis of IGP and AICAR. The resulting ammonia molecule is channeled to the active site of HisF. This Nitrosococcus oceani (strain ATCC 19707 / BCRC 17464 / JCM 30415 / NCIMB 11848 / C-107) protein is Imidazole glycerol phosphate synthase subunit HisH.